We begin with the raw amino-acid sequence, 357 residues long: Probable dual-specificity RNA methyltransferase RlmN (357 aa).

E95 acts as the Proton acceptor in catalysis. The 239-residue stretch at 105–343 (KKSSYTLCLS…VSIREERGSD (239 aa)) folds into the Radical SAM core domain. C112 and C348 are disulfide-bonded. 3 residues coordinate [4Fe-4S] cluster: C119, C123, and C126. Residues 174-175 (GE), S206, 229-231 (SLH), and N305 contribute to the S-adenosyl-L-methionine site. C348 (S-methylcysteine intermediate) is an active-site residue.

This sequence belongs to the radical SAM superfamily. RlmN family. Requires [4Fe-4S] cluster as cofactor.

It localises to the cytoplasm. The enzyme catalyses adenosine(2503) in 23S rRNA + 2 reduced [2Fe-2S]-[ferredoxin] + 2 S-adenosyl-L-methionine = 2-methyladenosine(2503) in 23S rRNA + 5'-deoxyadenosine + L-methionine + 2 oxidized [2Fe-2S]-[ferredoxin] + S-adenosyl-L-homocysteine. It catalyses the reaction adenosine(37) in tRNA + 2 reduced [2Fe-2S]-[ferredoxin] + 2 S-adenosyl-L-methionine = 2-methyladenosine(37) in tRNA + 5'-deoxyadenosine + L-methionine + 2 oxidized [2Fe-2S]-[ferredoxin] + S-adenosyl-L-homocysteine. Its function is as follows. Specifically methylates position 2 of adenine 2503 in 23S rRNA and position 2 of adenine 37 in tRNAs. The chain is Probable dual-specificity RNA methyltransferase RlmN from Syntrophomonas wolfei subsp. wolfei (strain DSM 2245B / Goettingen).